We begin with the raw amino-acid sequence, 857 residues long: Major vault protein (857 aa).

MVP repeat units follow at residues 18–60 (PYYY…ITIP), 62–122 (RHYC…KVVQ), 123–174 (ANAA…TIIR), 175–227 (PNQA…YVLT), 228–282 (EKNA…NTLT), 284–332 (RQYC…FILG), 333–387 (EDEG…IPLD), and 388–441 (ENEG…VAER). The tract at residues 434–453 (AKDPVAERSDRRGDRAAPRA) is disordered. A compositionally biased stretch (basic and acidic residues) spans 437-453 (PVAERSDRRGDRAAPRA). Residues 665–694 (ARHEAERLEQEARGRLERQKIMDEAEAEKS) form the IQ domain.

The vault ribonucleoprotein particle is a huge (400 A x 670 A) cage structure of 12.9 MDa. It consists of a dimer of half-vaults, with each half-vault comprising 39 identical major vault protein (MVP) chains, PARP4 and one or more vault RNAs (vRNAs). In terms of tissue distribution, expressed in embryos, tube feet and coelomocytes (at protein level). Not expressed in sperm cells (at protein level).

Its subcellular location is the cytoplasm. The protein resides in the nucleus. Its function is as follows. Required for normal vault structure. Vaults are multi-subunit structures that may act as scaffolds for proteins involved in signal transduction. Vaults may also play a role in nucleo-cytoplasmic transport. In Strongylocentrotus purpuratus (Purple sea urchin), this protein is Major vault protein.